A 442-amino-acid chain; its full sequence is D-serine dehydratase (442 aa).

N6-(pyridoxal phosphate)lysine is present on Lys-118.

It belongs to the serine/threonine dehydratase family. DsdA subfamily. In terms of assembly, monomer. Requires pyridoxal 5'-phosphate as cofactor.

It catalyses the reaction D-serine = pyruvate + NH4(+). This is D-serine dehydratase from Escherichia fergusonii (strain ATCC 35469 / DSM 13698 / CCUG 18766 / IAM 14443 / JCM 21226 / LMG 7866 / NBRC 102419 / NCTC 12128 / CDC 0568-73).